Reading from the N-terminus, the 986-residue chain is Mediator of RNA polymerase II transcription subunit 24 (986 aa).

6 short sequence motifs (LXXLL motif) span residues 128–132 (LNWLL), 341–345 (LTPLL), 445–449 (LDLLL), 554–558 (LVALL), 785–789 (LPNLL), and 855–859 (LMRLL).

The protein belongs to the Mediator complex subunit 24 family. Component of the Mediator complex.

The protein localises to the nucleus. Its function is as follows. Component of the Mediator complex, a coactivator involved in the regulated transcription of nearly all RNA polymerase II-dependent genes. Mediator functions as a bridge to convey information from gene-specific regulatory proteins to the basal RNA polymerase II transcription machinery. Mediator is recruited to promoters by direct interactions with regulatory proteins and serves as a scaffold for the assembly of a functional preinitiation complex with RNA polymerase II and the general transcription factors. The protein is Mediator of RNA polymerase II transcription subunit 24 (MED24) of Gallus gallus (Chicken).